We begin with the raw amino-acid sequence, 116 residues long: Protein Wnt-5(III) (116 aa).

A lipid anchor (O-palmitoleoyl serine; by PORCN) is attached at serine 1. Asparagine 69 carries N-linked (GlcNAc...) asparagine glycosylation. A disulfide bridge links cysteine 82 with cysteine 97.

Belongs to the Wnt family. In terms of processing, palmitoleoylation is required for efficient binding to frizzled receptors. Depalmitoleoylation leads to Wnt signaling pathway inhibition.

It localises to the secreted. The protein resides in the extracellular space. The protein localises to the extracellular matrix. Functionally, ligand for members of the frizzled family of seven transmembrane receptors. Probable developmental protein. May be a signaling molecule which affects the development of discrete regions of tissues. Is likely to signal over only few cell diameters. The polypeptide is Protein Wnt-5(III) (WNT-5(III)) (Eptatretus stoutii (Pacific hagfish)).